Consider the following 234-residue polypeptide: OVARIAN TUMOR DOMAIN-containing deubiquitinating enzyme 3 (234 aa).

Residues Y76–R234 enclose the OTU domain. The segment at V81 to C87 is cys-loop. The active site involves D84. C87 acts as the Nucleophile in catalysis. The segment at I154–S164 is variable-loop. The interval Y224 to H229 is his-loop. The active site involves H229.

This sequence belongs to the peptidase C85 family.

It carries out the reaction Thiol-dependent hydrolysis of ester, thioester, amide, peptide and isopeptide bonds formed by the C-terminal Gly of ubiquitin (a 76-residue protein attached to proteins as an intracellular targeting signal).. Hydrolase that can remove conjugated ubiquitin from proteins in vitro and may therefore play an important regulatory role at the level of protein turnover by preventing degradation. Cysteine protease with a preference for 'Lys-63' over 'Lys-48' over 'Met-1' -linked ubiquitin (UB) tetramers (e.g. Ub3 and Ub4) as substrates. Also cleaves RUB-GST fusion. This is OVARIAN TUMOR DOMAIN-containing deubiquitinating enzyme 3 from Arabidopsis thaliana (Mouse-ear cress).